Here is a 37-residue protein sequence, read N- to C-terminus: Large ribosomal subunit protein bL36c (37 aa).

Belongs to the bacterial ribosomal protein bL36 family.

The protein resides in the plastid. It localises to the chloroplast. This Chara vulgaris (Common stonewort) protein is Large ribosomal subunit protein bL36c.